Consider the following 230-residue polypeptide: Androgen-dependent TFPI-regulating protein (230 aa).

The Cytoplasmic portion of the chain corresponds to 1-7 (MTKTTTC). Residues 8-28 (VYHFLVLNWYIFLNYHIPQIG) form a helical membrane-spanning segment. Over 29 to 45 (RNEEKLREFHDGGRSKY) the chain is Extracellular. A helical membrane pass occupies residues 46–66 (LTLLNLLLQAIFFGVACLDDV). The Cytoplasmic segment spans residues 67–85 (LKRVIGRKDIKFVTSFRDL). Residues 86–106 (LFTTMAFPISTFVFLVFWTLF) form a helical membrane-spanning segment. Residues 107–120 (HYDRSLVYPKGLDD) are Extracellular-facing. Residues 121-141 (FFPAWVNHAMHTSIFPFSLFE) traverse the membrane as a helical segment. The Cytoplasmic segment spans residues 142–154 (TILRPHNYPSKKL). The helical transmembrane segment at 155 to 175 (GLTLLGAFNFAYIIRILWRYV) threads the bilayer. Residues 176 to 190 (QTGNWVYPVFDSLSP) lie on the Extracellular side of the membrane. A helical membrane pass occupies residues 191 to 211 (LGIIIFFSAAYILVAGIYLFG). At 212-230 (EKINHWKWGAIAKPQMKKN) the chain is on the cytoplasmic side.

The protein belongs to the AIG1 family.

The protein localises to the cell membrane. The catalysed reaction is 9-hexadecanoyloxy-octadecanoate + H2O = 9-hydroxy-octadecanoate + hexadecanoate + H(+). It carries out the reaction 12-hexadecanoyloxy-octadecanoate + H2O = 12-hydroxyoctadecanoate + hexadecanoate + H(+). It catalyses the reaction 9-(9Z-hexadecenoyloxy)-octadecanoate + H2O = (9Z)-hexadecenoate + 9-hydroxy-octadecanoate + H(+). The enzyme catalyses 12-(9Z-hexadecenoyloxy)-octadecanoate + H2O = 12-hydroxyoctadecanoate + (9Z)-hexadecenoate + H(+). The catalysed reaction is 13-(9Z-hexadecenoyloxy)-octadecanoate + H2O = 13-hydroxy-octadecanoate + (9Z)-hexadecenoate + H(+). It carries out the reaction 9-octadecanoyloxy-octadecanoate + H2O = 9-hydroxy-octadecanoate + octadecanoate + H(+). It catalyses the reaction 12-octadecanoyloxy-octadecanoate + H2O = 12-hydroxyoctadecanoate + octadecanoate + H(+). The enzyme catalyses 13-octadecanoyloxy-octadecanoate + H2O = 13-hydroxy-octadecanoate + octadecanoate + H(+). The catalysed reaction is 9-(9Z-octadecenoyloxy)-octadecanoate + H2O = 9-hydroxy-octadecanoate + (9Z)-octadecenoate + H(+). It carries out the reaction 12-(9Z-octadecenoyloxy)-octadecanoate + H2O = 12-hydroxyoctadecanoate + (9Z)-octadecenoate + H(+). It catalyses the reaction 13-(9Z-octadecenoyloxy)-octadecanoate + H2O = 13-hydroxy-octadecanoate + (9Z)-octadecenoate + H(+). The enzyme catalyses 5-(9Z-octadecenoyloxy)-octadecanoate + H2O = 5-hydroxy-octadecanoate + (9Z)-octadecenoate + H(+). Its function is as follows. Hydrolyzes bioactive fatty-acid esters of hydroxy-fatty acids (FAHFAs), but not other major classes of lipids. Shows a preference for FAHFAs with branching distal from the carboxylate head group of the lipids. Regulates the expression and the cell-associated anticoagulant activity of the inhibitor TFPI in endothelial cells (in vitro). This Mus musculus (Mouse) protein is Androgen-dependent TFPI-regulating protein (Adtrp).